Consider the following 75-residue polypeptide: uncharacterized protein (75 aa).

A dksA C4-type zinc finger spans residues 43–67 (CSECGLPIPTTRLRANPFAHRCVSC).

This is an uncharacterized protein from Haemophilus influenzae (strain ATCC 51907 / DSM 11121 / KW20 / Rd).